The following is a 156-amino-acid chain: Cyanate hydratase (156 aa).

Active-site residues include R96, E99, and S122.

The protein belongs to the cyanase family.

The catalysed reaction is cyanate + hydrogencarbonate + 3 H(+) = NH4(+) + 2 CO2. Functionally, catalyzes the reaction of cyanate with bicarbonate to produce ammonia and carbon dioxide. This chain is Cyanate hydratase, found in Burkholderia orbicola (strain MC0-3).